We begin with the raw amino-acid sequence, 644 residues long: Exoribonuclease 2 (644 aa).

Residues 189 to 516 form the RNB domain; it reads REDLTALDFV…NHRLLKAVIK (328 aa). Residues 561–643 form the S1 motif domain; that stretch reads DTRFAAEIVD…ETRSIIARPV (83 aa).

This sequence belongs to the RNR ribonuclease family. RNase II subfamily.

It is found in the cytoplasm. The catalysed reaction is Exonucleolytic cleavage in the 3'- to 5'-direction to yield nucleoside 5'-phosphates.. Functionally, involved in mRNA degradation. Hydrolyzes single-stranded polyribonucleotides processively in the 3' to 5' direction. This Escherichia coli O127:H6 (strain E2348/69 / EPEC) protein is Exoribonuclease 2.